Consider the following 375-residue polypeptide: MNTSHFLAPLFPGSLQGKNGTNPLDSPYNFSDGCQDSAELLAFIITTYSIETILGVLGNLCLIFVTTRQKEKSNVTNLLIANLAFSDFLMCLICQPLTVTYTIMDYWIFGEVLCKMLTFIQCMSVTVSILSLVLVALERHQLIINPTGWKPSIFQAYLGIVVIWFVSCFLSLPFLANSTLNDLFHYNHSKVVEFLEDKVVCFVSWSSDHHRLIYTTFLLLFQYCIPLAFILVCYIRIYQRLQRQKHVFHAHACSSRAGQMKRINSMLMTMVTAFAVLWLPLHVFNTLEDWYQEAIPACHGNLIFLMCHLLAMASTCVNPFIYGFLNINFKKDIKALVLTCHCRSPRGESEHLPLSTVHTDLSKGSMRMGSKSNFI.

At 1–39 the chain is on the extracellular side; that stretch reads MNTSHFLAPLFPGSLQGKNGTNPLDSPYNFSDGCQDSAE. N-linked (GlcNAc...) asparagine glycosylation is found at Asn2, Asn19, and Asn29. Residues 40-60 traverse the membrane as a helical segment; that stretch reads LLAFIITTYSIETILGVLGNL. Residues 61-78 lie on the Cytoplasmic side of the membrane; sequence CLIFVTTRQKEKSNVTNL. A helical membrane pass occupies residues 79-99; it reads LIANLAFSDFLMCLICQPLTV. At 100 to 116 the chain is on the extracellular side; sequence TYTIMDYWIFGEVLCKM. A disulfide bridge connects residues Cys114 and Cys201. The chain crosses the membrane as a helical span at residues 117–137; that stretch reads LTFIQCMSVTVSILSLVLVAL. At 138–155 the chain is on the cytoplasmic side; that stretch reads ERHQLIINPTGWKPSIFQ. The chain crosses the membrane as a helical span at residues 156–176; sequence AYLGIVVIWFVSCFLSLPFLA. At 177–211 the chain is on the extracellular side; it reads NSTLNDLFHYNHSKVVEFLEDKVVCFVSWSSDHHR. Asn187 carries an N-linked (GlcNAc...) asparagine glycan. The chain crosses the membrane as a helical span at residues 212–232; the sequence is LIYTTFLLLFQYCIPLAFILV. Residues 233–266 are Cytoplasmic-facing; sequence CYIRIYQRLQRQKHVFHAHACSSRAGQMKRINSM. Residues 267–287 form a helical membrane-spanning segment; that stretch reads LMTMVTAFAVLWLPLHVFNTL. At 288–301 the chain is on the extracellular side; sequence EDWYQEAIPACHGN. A helical membrane pass occupies residues 302–322; it reads LIFLMCHLLAMASTCVNPFIY. Topologically, residues 323–375 are cytoplasmic; that stretch reads GFLNINFKKDIKALVLTCHCRSPRGESEHLPLSTVHTDLSKGSMRMGSKSNFI. Cys340 carries the S-palmitoyl cysteine lipid modification.

It belongs to the G-protein coupled receptor 1 family. Heart, detected in small intestine.

It is found in the cell membrane. G protein-coupled receptor for PPY/pancreatic polypeptide/PP that is negatively coupled to cAMP. Has much lower affinity for the NPY/neuropeptide Y and PYY/peptide YY. The chain is Neuropeptide Y receptor type 4 (Npy4r) from Mus musculus (Mouse).